The chain runs to 264 residues: Taurine import ATP-binding protein TauB (264 aa).

Residues 4-233 (LQLERISAQY…RYAAGESARA (230 aa)) form the ABC transporter domain. Position 38–45 (38–45 (GPSGSGKT)) interacts with ATP.

The protein belongs to the ABC transporter superfamily. Taurine importer (TC 3.A.1.17.1) family. The complex is composed of two ATP-binding proteins (TauB), two transmembrane proteins (TauC) and a solute-binding protein (TauA).

The protein localises to the cell inner membrane. It catalyses the reaction taurine(out) + ATP + H2O = taurine(in) + ADP + phosphate + H(+). Functionally, part of the ABC transporter complex TauABC involved in taurine import. Responsible for energy coupling to the transport system. The chain is Taurine import ATP-binding protein TauB from Pseudomonas fluorescens (strain Pf0-1).